The sequence spans 340 residues: UDP-3-O-(3-hydroxymyristoyl)glucosamine N-acyltransferase (340 aa).

Catalysis depends on histidine 239, which acts as the Proton acceptor.

It belongs to the transferase hexapeptide repeat family. LpxD subfamily. In terms of assembly, homotrimer.

The enzyme catalyses a UDP-3-O-[(3R)-3-hydroxyacyl]-alpha-D-glucosamine + a (3R)-hydroxyacyl-[ACP] = a UDP-2-N,3-O-bis[(3R)-3-hydroxyacyl]-alpha-D-glucosamine + holo-[ACP] + H(+). The catalysed reaction is UDP-3-O-[(3R)-3-hydroxytetradecanoyl]-alpha-D-glucosamine + (3R)-hydroxytetradecanoyl-[ACP] = UDP-2-N,3-O-bis[(3R)-3-hydroxytetradecanoyl]-alpha-D-glucosamine + holo-[ACP] + H(+). The protein operates within glycolipid biosynthesis; lipid IV(A) biosynthesis; lipid IV(A) from (3R)-3-hydroxytetradecanoyl-[acyl-carrier-protein] and UDP-N-acetyl-alpha-D-glucosamine: step 3/6. Functionally, catalyzes the N-acylation of UDP-3-O-(hydroxytetradecanoyl)glucosamine using 3-hydroxytetradecanoyl-ACP as the acyl donor. Is involved in the biosynthesis of lipid A, a phosphorylated glycolipid that anchors the lipopolysaccharide to the outer membrane of the cell. This is UDP-3-O-(3-hydroxymyristoyl)glucosamine N-acyltransferase from Yersinia enterocolitica.